A 547-amino-acid chain; its full sequence is Dihydrolipoyllysine-residue acetyltransferase component of pyruvate dehydrogenase complex (547 aa).

The Lipoyl-binding 1 domain occupies 2 to 75 (SELIRVPDIG…KEGDEILELE (74 aa)). The residue at position 41 (K41) is an N6-lipoyllysine. A disordered region spans residues 75–117 (EVEGGEQPAEAKAEAAPAQPEAPKAEAPAPAPSESKPAAPAAA). Low complexity predominate over residues 80–117 (EQPAEAKAEAAPAQPEAPKAEAPAPAPSESKPAAPAAA). Residues 119-193 (VQDIKVPDIG…GTGDLILKLK (75 aa)) form the Lipoyl-binding 2 domain. Residue K159 is modified to N6-lipoyllysine. Positions 202–231 (EEQPAAAPAQAAAPAAEQKPAAAAPAPAKA) are enriched in low complexity. The tract at residues 202 to 248 (EEQPAAAPAQAAAPAAEQKPAAAAPAPAKADTPAPVGAPSRDGAKVH) is disordered. Residues 248–285 (HAGPAVRMLAREFGVELSEVKASGPKGRILKEDVQVFV) form the Peripheral subunit-binding (PSBD) domain. H520 is a catalytic residue.

The protein belongs to the 2-oxoacid dehydrogenase family. As to quaternary structure, forms a 24-polypeptide structural core with octahedral symmetry. (R)-lipoate serves as cofactor.

It catalyses the reaction N(6)-[(R)-dihydrolipoyl]-L-lysyl-[protein] + acetyl-CoA = N(6)-[(R)-S(8)-acetyldihydrolipoyl]-L-lysyl-[protein] + CoA. Its function is as follows. The pyruvate dehydrogenase complex catalyzes the overall conversion of pyruvate to acetyl-CoA and CO(2). It contains multiple copies of three enzymatic components: pyruvate dehydrogenase (E1), dihydrolipoamide acetyltransferase (E2) and lipoamide dehydrogenase (E3). The sequence is that of Dihydrolipoyllysine-residue acetyltransferase component of pyruvate dehydrogenase complex (aceF) from Pseudomonas aeruginosa (strain ATCC 15692 / DSM 22644 / CIP 104116 / JCM 14847 / LMG 12228 / 1C / PRS 101 / PAO1).